Here is a 325-residue protein sequence, read N- to C-terminus: tRNA dimethylallyltransferase (325 aa).

11-18 (GPTASGKS) provides a ligand contact to ATP. Substrate is bound at residue 13–18 (TASGKS). 2 interaction with substrate tRNA regions span residues 36–39 (DSMQ) and 160–164 (QRLIR).

It belongs to the IPP transferase family. As to quaternary structure, monomer. Mg(2+) serves as cofactor.

It catalyses the reaction adenosine(37) in tRNA + dimethylallyl diphosphate = N(6)-dimethylallyladenosine(37) in tRNA + diphosphate. Its function is as follows. Catalyzes the transfer of a dimethylallyl group onto the adenine at position 37 in tRNAs that read codons beginning with uridine, leading to the formation of N6-(dimethylallyl)adenosine (i(6)A). In Rickettsia canadensis (strain McKiel), this protein is tRNA dimethylallyltransferase.